Reading from the N-terminus, the 410-residue chain is BTB/POZ and MATH domain-containing protein 5 (410 aa).

The disordered stretch occupies residues 1–24; that stretch reads MSESVIQGSNPDRVLSPTSSKSVT. The MATH domain maps to 28-162; it reads NGSHQFVIQG…DDCLIINCTV (135 aa). The BTB domain maps to 198 to 264; that stretch reads SDITFNIAGE…MYKDSLPEDV (67 aa).

This sequence belongs to the Tdpoz family. In terms of assembly, heterodimer with BPM1 and BPM3. Interacts with RAP2-4. Binds to MYB56 at the promoter of FLOWERING LOCUS T (FT). In terms of tissue distribution, ubiquitous.

It localises to the nucleus. It is found in the cytoplasm. It functions in the pathway protein modification; protein ubiquitination. Functionally, may act as a substrate-specific adapter of an E3 ubiquitin-protein ligase complex (CUL3-RBX1-BTB) which mediates the ubiquitination and subsequent proteasomal degradation of target proteins. The polypeptide is BTB/POZ and MATH domain-containing protein 5 (BPM5) (Arabidopsis thaliana (Mouse-ear cress)).